A 497-amino-acid polypeptide reads, in one-letter code: Cytochrome P450 monooxygenase cicH (497 aa).

Residues 2-19 (AILVRLFFALFVVSVYFF) traverse the membrane as a helical segment. C439 serves as a coordination point for heme. N-linked (GlcNAc...) asparagine glycosylation is present at N443.

This sequence belongs to the cytochrome P450 family. The cofactor is heme.

The protein resides in the membrane. It participates in phytotoxin biosynthesis. In terms of biological role, cytochrome P450 monooxygenase; part of the gene cluster that mediates the biosynthesis of cichorine, a phytotoxin active against knapweed, corn, and soybeans. The first step in the pathway is performed by the non-reducing polyketide synthase pkbA that condenses one acetyl-CoA starter unit with 3 malonyl-CoA units. PkbA also catalyzes one methylation step to produce 3-methylorsellinate. The nonribosomal peptide synthase-like protein cicB, the cytochrome P450 monooxygenase cicH and the O-methyltransferase cicE are involved in the conversion of 3-methylorsellinate into nidulol. CicB converts 3-methylorsellinate to a yet unidentified intermediate, cicH may play a ring-closing role for cichorine and cicE is plausibly responsible for the methylation of one of the phenol groups. The oxidoreductase cicC acts downstream with still unidentified enzymes to further convert nidulol into cichorine. The protein is Cytochrome P450 monooxygenase cicH of Emericella nidulans (strain FGSC A4 / ATCC 38163 / CBS 112.46 / NRRL 194 / M139) (Aspergillus nidulans).